Here is a 116-residue protein sequence, read N- to C-terminus: UPF0102 protein ELI_05985 (116 aa).

This sequence belongs to the UPF0102 family.

This chain is UPF0102 protein ELI_05985, found in Erythrobacter litoralis (strain HTCC2594).